The primary structure comprises 71 residues: UPF0346 protein SAK_1533 (71 aa).

It belongs to the UPF0346 family.

The chain is UPF0346 protein SAK_1533 from Streptococcus agalactiae serotype Ia (strain ATCC 27591 / A909 / CDC SS700).